Reading from the N-terminus, the 32-residue chain is Alpha-conotoxin RgIA (32 aa).

Residues 1–19 (SNKRKNAAMLDMIAQHAIR) constitute a propeptide that is removed on maturation. Intrachain disulfides connect C21–C27 and C22–C31.

It belongs to the conotoxin A superfamily. Post-translationally, the disulfide bond CysI-CysIII is important for alpha-9-alpha-10 subtype inhibition, whereas the bond CysII-CysIV contributes to GABA(B) modulation. In terms of tissue distribution, expressed by the venom duct.

The protein resides in the secreted. In terms of biological role, this toxin target two types of receptors, the nicotinic acetylcholine receptor (nAChR) and the G-protein-coupled receptor GABA(B). It specifically inhibits the alpha-9-alpha-10/CHRNA9-CHRNA10 nAChR, with preference for rat receptors. It interacts with the alpha-10(+)/alpha-9(-)interface of the receptor. It shows a two order of magnitude species difference potency for the rat versus human alpha-9-alpha-10 nAChR, due to the Thr-86 located in the alpha-9 nAChR subunit. This toxin also shows inhibition of high voltage-activated (HVA) calcium channels (Cav2.2) by acting on GABA(B) receptors (GABBR1 and GABBR2). In vivo, this toxin produces an acute antinociceptive effect in peripheral nerve-injured rats, which may be related to the inhibition of immune cell buildup at the site of nerve injury. In addition, when intramuscularly injected into rats following chronic constriction injury of the sciatic nerve, this toxin protects peripheral nervous tissues as well as prevents central maladaptive plasticity by inhibiting glial cell activation. The polypeptide is Alpha-conotoxin RgIA (Conus regius (Crown cone)).